The chain runs to 191 residues: Penicillin-binding protein activator LpoB (191 aa).

The signal sequence occupies residues 1-16 (MKRILFVILSTMLLAS). A lipid anchor (N-palmitoyl cysteine) is attached at C17. Residue C17 is the site of S-diacylglycerol cysteine attachment. The disordered stretch occupies residues 25–48 (QPAPVTPVEPKEKQETTPIEPSEK).

It belongs to the LpoB family. In terms of assembly, interacts with PBP1b.

It is found in the cell outer membrane. Regulator of peptidoglycan synthesis that is essential for the function of penicillin-binding protein 1B (PBP1b). The protein is Penicillin-binding protein activator LpoB of Xenorhabdus nematophila (strain ATCC 19061 / DSM 3370 / CCUG 14189 / LMG 1036 / NCIMB 9965 / AN6).